The chain runs to 275 residues: Endolytic peptidoglycan transglycosylase RlpA (275 aa).

Residues M1–G22 form the signal peptide. A lipid anchor (N-palmitoyl cysteine) is attached at C23. C23 carries S-diacylglycerol cysteine lipidation. The SPOR domain occupies I200–E275.

Belongs to the RlpA family.

It localises to the cell membrane. In terms of biological role, lytic transglycosylase with a strong preference for naked glycan strands that lack stem peptides. This chain is Endolytic peptidoglycan transglycosylase RlpA, found in Campylobacter jejuni subsp. jejuni serotype O:2 (strain ATCC 700819 / NCTC 11168).